We begin with the raw amino-acid sequence, 348 residues long: EGF-like domain containing protein 1 (348 aa).

The signal sequence occupies residues 1–19 (MFYLSTFMTIVISLSLVSC). An EGF-like domain is found at 60–92 (TGSDCKVTCQNNGRCYDGNKCLCSSDYTGHLCE). 3 disulfide bridges follow: cysteine 64–cysteine 74, cysteine 68–cysteine 80, and cysteine 82–cysteine 91. A ZP domain is found at 99 to 342 (RCTLDGVVFE…PTCAAPAVSQ (244 aa)).

In terms of tissue distribution, prismatic layer of shell (at protein level). Expressed primarily in the mantle with highest level in the mantle edge and lower level in the mantle pallium.

It localises to the secreted. The chain is EGF-like domain containing protein 1 from Margaritifera margaritifera (Freshwater pearl mussel).